The chain runs to 198 residues: uncharacterized protein (198 aa).

A disordered region spans residues 166–198 (GYEPDEKARKKRERVKRSEVEDQLKINVKPTRR).

This is an uncharacterized protein from Coxiella burnetii (strain RSA 493 / Nine Mile phase I).